A 367-amino-acid chain; its full sequence is (E)-2-epi-beta-caryophyllene synthase (367 aa).

Positions 93, 234, and 238 each coordinate Mg(2+). The DDXXE motif signature appears at 93–97 (DDIAE).

Belongs to the terpene synthase family. Mg(2+) serves as cofactor. Mn(2+) is required as a cofactor.

It catalyses the reaction (2E,6E)-farnesyl diphosphate = (E)-2-epi-beta-caryophyllene + diphosphate. Its pathway is secondary metabolite biosynthesis; terpenoid biosynthesis. Sesquiterpene synthase converting farnesyl diphosphate to (E)-2-epi-beta-caryophyllene as the major product, and to two other unidentified sesquiterpenes. Has no diterpene synthase activity. This chain is (E)-2-epi-beta-caryophyllene synthase, found in Selaginella moellendorffii (Spikemoss).